Reading from the N-terminus, the 280-residue chain is Bifunctional protein FolD (280 aa).

NADP(+) is bound by residues 161-163, serine 186, and isoleucine 227; that span reads GRS.

This sequence belongs to the tetrahydrofolate dehydrogenase/cyclohydrolase family. Homodimer.

The enzyme catalyses (6R)-5,10-methylene-5,6,7,8-tetrahydrofolate + NADP(+) = (6R)-5,10-methenyltetrahydrofolate + NADPH. It carries out the reaction (6R)-5,10-methenyltetrahydrofolate + H2O = (6R)-10-formyltetrahydrofolate + H(+). It functions in the pathway one-carbon metabolism; tetrahydrofolate interconversion. In terms of biological role, catalyzes the oxidation of 5,10-methylenetetrahydrofolate to 5,10-methenyltetrahydrofolate and then the hydrolysis of 5,10-methenyltetrahydrofolate to 10-formyltetrahydrofolate. In Caldanaerobacter subterraneus subsp. tengcongensis (strain DSM 15242 / JCM 11007 / NBRC 100824 / MB4) (Thermoanaerobacter tengcongensis), this protein is Bifunctional protein FolD.